An 89-amino-acid polypeptide reads, in one-letter code: Large ribosomal subunit protein uL24 (89 aa).

The protein belongs to the universal ribosomal protein uL24 family. As to quaternary structure, part of the 50S ribosomal subunit.

One of two assembly initiator proteins, it binds directly to the 5'-end of the 23S rRNA, where it nucleates assembly of the 50S subunit. Functionally, one of the proteins that surrounds the polypeptide exit tunnel on the outside of the subunit. The polypeptide is Large ribosomal subunit protein uL24 (Oenococcus oeni (strain ATCC BAA-331 / PSU-1)).